We begin with the raw amino-acid sequence, 593 residues long: Phosphoinositide phosphatase SAC6 (593 aa).

An SAC domain is found at 128 to 456 (LSVAERTTGL…GDDISIQYSG (329 aa)). Positions 391 to 402 (RTNCIDCLDRTN) match the Phosphatase catalytic core motif. 2 helical membrane passes run 526–546 (AVANFPVALTVILISFWFATM) and 555–575 (YKHLLFSLVWAGISVAVAALV).

As to expression, predominantly expressed in flowers.

The protein resides in the endoplasmic reticulum membrane. In terms of biological role, phosphoinositide phosphatase that hydrolyzes PtdIns(3)P and PtdIns(4)P. Involved in priming for different defense responses. The sequence is that of Phosphoinositide phosphatase SAC6 (SAC6) from Arabidopsis thaliana (Mouse-ear cress).